The chain runs to 868 residues: LPS-assembly protein LptD (868 aa).

The N-terminal stretch at 1 to 24 is a signal peptide; that stretch reads MLKGIHKYLLMCFGTVLFTVQANA.

Belongs to the LptD family. As to quaternary structure, component of the lipopolysaccharide transport and assembly complex. Interacts with LptE and LptA.

The protein resides in the cell outer membrane. Together with LptE, is involved in the assembly of lipopolysaccharide (LPS) at the surface of the outer membrane. The protein is LPS-assembly protein LptD of Francisella tularensis subsp. holarctica (strain LVS).